Consider the following 475-residue polypeptide: Ribulose bisphosphate carboxylase large chain (475 aa).

Positions 1 to 2 (MS) are excised as a propeptide. At proline 3 the chain carries N-acetylproline. Position 14 is an N6,N6,N6-trimethyllysine (lysine 14). The substrate site is built by asparagine 123 and threonine 173. Lysine 175 serves as the catalytic Proton acceptor. Lysine 177 lines the substrate pocket. 3 residues coordinate Mg(2+): lysine 201, aspartate 203, and glutamate 204. Lysine 201 bears the N6-carboxylysine mark. Residue histidine 294 is the Proton acceptor of the active site. The substrate site is built by arginine 295, histidine 327, and serine 379.

It belongs to the RuBisCO large chain family. Type I subfamily. As to quaternary structure, heterohexadecamer of 8 large chains and 8 small chains; disulfide-linked. The disulfide link is formed within the large subunit homodimers. Mg(2+) is required as a cofactor. The disulfide bond which can form in the large chain dimeric partners within the hexadecamer appears to be associated with oxidative stress and protein turnover.

Its subcellular location is the plastid. The protein localises to the chloroplast. The enzyme catalyses 2 (2R)-3-phosphoglycerate + 2 H(+) = D-ribulose 1,5-bisphosphate + CO2 + H2O. It catalyses the reaction D-ribulose 1,5-bisphosphate + O2 = 2-phosphoglycolate + (2R)-3-phosphoglycerate + 2 H(+). Functionally, ruBisCO catalyzes two reactions: the carboxylation of D-ribulose 1,5-bisphosphate, the primary event in carbon dioxide fixation, as well as the oxidative fragmentation of the pentose substrate in the photorespiration process. Both reactions occur simultaneously and in competition at the same active site. This Illicium oligandrum (Star anise) protein is Ribulose bisphosphate carboxylase large chain.